The primary structure comprises 1391 residues: DNA-directed RNA polymerase subunit beta' (1391 aa).

Positions 72, 74, 87, and 90 each coordinate Zn(2+). Residues aspartate 462, aspartate 464, and aspartate 466 each contribute to the Mg(2+) site. 4 residues coordinate Zn(2+): cysteine 816, cysteine 890, cysteine 897, and cysteine 900.

This sequence belongs to the RNA polymerase beta' chain family. The RNAP catalytic core consists of 2 alpha, 1 beta, 1 beta' and 1 omega subunit. When a sigma factor is associated with the core the holoenzyme is formed, which can initiate transcription. The cofactor is Mg(2+). Zn(2+) serves as cofactor.

It catalyses the reaction RNA(n) + a ribonucleoside 5'-triphosphate = RNA(n+1) + diphosphate. Functionally, DNA-dependent RNA polymerase catalyzes the transcription of DNA into RNA using the four ribonucleoside triphosphates as substrates. This chain is DNA-directed RNA polymerase subunit beta', found in Neisseria meningitidis serogroup A / serotype 4A (strain DSM 15465 / Z2491).